The sequence spans 140 residues: Ctenidin-1 (140 aa).

Positions 1 to 19 (MKHLIPLIVMASVVLAVYA) are cleaved as a signal peptide. Gly138 bears the Glycine amide mark.

Belongs to the glycine-rich peptide family. As to expression, expressed in hemocytes (at protein level).

It is found in the secreted. In terms of biological role, antimicrobial protein with bacteriostatic activity against the Gram-negative bacterium E.coli, and very weak activity against the Gram-positive bacterium S.aureus. Lacks activity against the yeast C.albicans. This Cupiennius salei (American wandering spider) protein is Ctenidin-1.